The chain runs to 402 residues: CinA-like protein (402 aa).

Belongs to the CinA family.

In Fusobacterium nucleatum subsp. nucleatum (strain ATCC 25586 / DSM 15643 / BCRC 10681 / CIP 101130 / JCM 8532 / KCTC 2640 / LMG 13131 / VPI 4355), this protein is CinA-like protein.